Consider the following 408-residue polypeptide: Glutamate N-acetyltransferase (408 aa).

Residues threonine 150, lysine 176, threonine 189, glutamate 271, asparagine 403, and threonine 408 each coordinate substrate. The Nucleophile role is filled by threonine 189.

Belongs to the ArgJ family. Heterotetramer of two alpha and two beta chains.

Its subcellular location is the cytoplasm. It catalyses the reaction N(2)-acetyl-L-ornithine + L-glutamate = N-acetyl-L-glutamate + L-ornithine. It participates in amino-acid biosynthesis; L-arginine biosynthesis; L-ornithine and N-acetyl-L-glutamate from L-glutamate and N(2)-acetyl-L-ornithine (cyclic): step 1/1. In terms of biological role, catalyzes the transfer of the acetyl group from N(2)-acetylornithine to glutamate, forming N-acetylglutamate and L-ornithine. This chain is Glutamate N-acetyltransferase, found in Methanococcus maripaludis (strain C6 / ATCC BAA-1332).